The following is a 471-amino-acid chain: UDP-N-acetylmuramate--L-alanine ligase (471 aa).

Residue 112–118 (GTHGKTT) coordinates ATP.

Belongs to the MurCDEF family.

Its subcellular location is the cytoplasm. It carries out the reaction UDP-N-acetyl-alpha-D-muramate + L-alanine + ATP = UDP-N-acetyl-alpha-D-muramoyl-L-alanine + ADP + phosphate + H(+). It participates in cell wall biogenesis; peptidoglycan biosynthesis. In terms of biological role, cell wall formation. In Aromatoleum aromaticum (strain DSM 19018 / LMG 30748 / EbN1) (Azoarcus sp. (strain EbN1)), this protein is UDP-N-acetylmuramate--L-alanine ligase.